The following is a 255-amino-acid chain: Small ribosomal subunit protein eS1B (255 aa).

Ala2 is subject to N-acetylalanine; partial. Residue Ser245 is modified to Phosphoserine. Lys248 participates in a covalent cross-link: Glycyl lysine isopeptide (Lys-Gly) (interchain with G-Cter in ubiquitin). Thr254 carries the post-translational modification Phosphothreonine.

The protein belongs to the eukaryotic ribosomal protein eS1 family. In terms of assembly, component of the small ribosomal subunit. Mature ribosomes consist of a small (40S) and a large (60S) subunit. The 40S subunit contains about 33 different proteins and 1 molecule of RNA (18S). The 60S subunit contains about 49 different proteins and 3 molecules of RNA (25S, 5.8S and 5S).

Its subcellular location is the cytoplasm. This is Small ribosomal subunit protein eS1B from Saccharomyces cerevisiae (strain RM11-1a) (Baker's yeast).